Reading from the N-terminus, the 351-residue chain is UDP-N-acetylenolpyruvoylglucosamine reductase (351 aa).

An FAD-binding PCMH-type domain is found at 11-213 (GVGGSIACFI…KQVRDQVLRI (203 aa)). Arg158 is a catalytic residue. Ser239 serves as the catalytic Proton donor. The active site involves Glu343.

This sequence belongs to the MurB family. FAD is required as a cofactor.

It localises to the cytoplasm. The catalysed reaction is UDP-N-acetyl-alpha-D-muramate + NADP(+) = UDP-N-acetyl-3-O-(1-carboxyvinyl)-alpha-D-glucosamine + NADPH + H(+). The protein operates within cell wall biogenesis; peptidoglycan biosynthesis. Functionally, cell wall formation. The sequence is that of UDP-N-acetylenolpyruvoylglucosamine reductase from Tropheryma whipplei (strain TW08/27) (Whipple's bacillus).